The chain runs to 348 residues: Large ribosomal subunit protein uL3m (348 aa).

The N-terminal 40 residues, 1-40, are a transit peptide targeting the mitochondrion; sequence MPGWRLLAWAGARVLDRGTGGLGTALGSGNRTDICVLVRS.

It belongs to the universal ribosomal protein uL3 family. As to quaternary structure, component of the mitochondrial ribosome large subunit (39S) which comprises a 16S rRNA and about 50 distinct proteins.

The protein resides in the mitochondrion. The protein is Large ribosomal subunit protein uL3m (MRPL3) of Bos taurus (Bovine).